Consider the following 233-residue polypeptide: 2,3,4,5-tetrahydropyridine-2,6-dicarboxylate N-acetyltransferase (233 aa).

The protein belongs to the transferase hexapeptide repeat family. DapH subfamily.

It catalyses the reaction (S)-2,3,4,5-tetrahydrodipicolinate + acetyl-CoA + H2O = L-2-acetamido-6-oxoheptanedioate + CoA. Its pathway is amino-acid biosynthesis; L-lysine biosynthesis via DAP pathway; LL-2,6-diaminopimelate from (S)-tetrahydrodipicolinate (acetylase route): step 1/3. In terms of biological role, catalyzes the transfer of an acetyl group from acetyl-CoA to tetrahydrodipicolinate. In Leuconostoc mesenteroides subsp. mesenteroides (strain ATCC 8293 / DSM 20343 / BCRC 11652 / CCM 1803 / JCM 6124 / NCDO 523 / NBRC 100496 / NCIMB 8023 / NCTC 12954 / NRRL B-1118 / 37Y), this protein is 2,3,4,5-tetrahydropyridine-2,6-dicarboxylate N-acetyltransferase.